Consider the following 1095-residue polypeptide: Collagen, type I, alpha 1a (1095 aa).

A compositionally biased stretch (pro residues) spans 1–21 (SPAMPVPGPMGPMGPRGPPGS). The interval 1–1011 (SPAMPVPGPM…QPQEKAPDPY (1011 aa)) is disordered. Positions 22–49 (PGASGPQGFTGPPGEPGEAGSAGAMGPR) are enriched in low complexity. Basic and acidic residues predominate over residues 58–72 (NGEDGESGKPGRGGE). The span at 127-145 (TGAAGAAGARGNDGAAGAA) shows a compositional bias: low complexity. Over residues 147–160 (PPGPTGPAGPPGFP) the composition is skewed to pro residues. Positions 161–179 (GGPGAKGDAGAQGGRGPEG) are enriched in gly residues. 3 stretches are compositionally biased toward low complexity: residues 180-223 (PAGA…AGAP), 232-270 (SGPQ…APGV), and 288-297 (EPGAAGARGA). The span at 299 to 311 (GERGGPGGRGFPG) shows a compositional bias: gly residues. Composition is skewed to low complexity over residues 385–400 (VGAR…PGPK), 477–489 (LPGE…PAGA), 498–544 (ERGA…QGMP), and 577–592 (RGLT…AGAT). A compositionally biased stretch (gly residues) spans 602–611 (GPVGPGGARG). Low complexity-rich tracts occupy residues 625–661 (AGFA…AGPT) and 675–697 (PKGA…AGRV). The span at 699-712 (PPGPSGNPGPPGPA) shows a compositional bias: pro residues. The segment covering 804-822 (PGLAGAPGEPGREGSPGNE) has biased composition (low complexity). Over residues 848-858 (APGPPGAPGPV) the composition is skewed to pro residues. The segment covering 872 to 893 (PAGPAGSAGPAGPRGPAGALGL) has biased composition (low complexity). A compositionally biased stretch (basic and acidic residues) spans 894–908 (RGDKGESGEAGERGM). Over residues 924–960 (AGSSGEQGPAGAAGPAGPRGPAGSAGSPGKDGMSGLP) the composition is skewed to low complexity. Residues 976-988 (AGPPGPPGPPGAP) are compositionally biased toward pro residues. Residues 1062-1095 (TGTWGKLPLLDLAPMDVGAPDQEFGLEVGPVCFL) enclose the Fibrillar collagen NC1 domain.

It belongs to the fibrillar collagen family.

It is found in the secreted. Its subcellular location is the extracellular space. The protein resides in the extracellular matrix. In Epinephelus caninus (Dogtooth grouper), this protein is Collagen, type I, alpha 1a.